A 169-amino-acid polypeptide reads, in one-letter code: Peptide methionine sulfoxide reductase MsrA (169 aa).

Cys10 is an active-site residue.

It belongs to the MsrA Met sulfoxide reductase family.

The catalysed reaction is L-methionyl-[protein] + [thioredoxin]-disulfide + H2O = L-methionyl-(S)-S-oxide-[protein] + [thioredoxin]-dithiol. It carries out the reaction [thioredoxin]-disulfide + L-methionine + H2O = L-methionine (S)-S-oxide + [thioredoxin]-dithiol. Has an important function as a repair enzyme for proteins that have been inactivated by oxidation. Catalyzes the reversible oxidation-reduction of methionine sulfoxide in proteins to methionine. In Streptococcus equi subsp. equi (strain 4047), this protein is Peptide methionine sulfoxide reductase MsrA.